The primary structure comprises 242 residues: Haloacid dehalogenase-like hydrolase domain-containing protein 3 (242 aa).

This sequence belongs to the HAD-like hydrolase superfamily.

The polypeptide is Haloacid dehalogenase-like hydrolase domain-containing protein 3 (hdhd3) (Danio rerio (Zebrafish)).